An 88-amino-acid chain; its full sequence is Small ribosomal subunit protein bS20 (88 aa).

Disordered stretches follow at residues 1-23 (MANT…VNKA) and 65-88 (GVMH…SLSA).

Belongs to the bacterial ribosomal protein bS20 family.

In terms of biological role, binds directly to 16S ribosomal RNA. The polypeptide is Small ribosomal subunit protein bS20 (Rhizobium meliloti (strain 1021) (Ensifer meliloti)).